The chain runs to 686 residues: DNA ligase 2 (686 aa).

Residues Asp37–Asp41, Ser86–Leu87, and Glu121 each bind NAD(+). The N6-AMP-lysine intermediate role is filled by Lys123. Residues Arg144, Glu179, Lys295, and Lys319 each coordinate NAD(+). Residues Cys413, Cys416, Cys431, and Cys436 each contribute to the Zn(2+) site. In terms of domain architecture, BRCT spans Val593–Ser681.

The protein belongs to the NAD-dependent DNA ligase family. LigA subfamily. Requires Mg(2+) as cofactor. The cofactor is Mn(2+).

It carries out the reaction NAD(+) + (deoxyribonucleotide)n-3'-hydroxyl + 5'-phospho-(deoxyribonucleotide)m = (deoxyribonucleotide)n+m + AMP + beta-nicotinamide D-nucleotide.. In terms of biological role, DNA ligase that catalyzes the formation of phosphodiester linkages between 5'-phosphoryl and 3'-hydroxyl groups in double-stranded DNA using NAD as a coenzyme and as the energy source for the reaction. It is essential for DNA replication and repair of damaged DNA. This Deinococcus deserti (strain DSM 17065 / CIP 109153 / LMG 22923 / VCD115) protein is DNA ligase 2.